A 360-amino-acid chain; its full sequence is Peptide chain release factor 1 (360 aa).

Glutamine 234 is subject to N5-methylglutamine. The tract at residues 285–305 is disordered; sequence RAQGIAEDRKSQVGTGDRSER.

It belongs to the prokaryotic/mitochondrial release factor family. In terms of processing, methylated by PrmC. Methylation increases the termination efficiency of RF1.

Its subcellular location is the cytoplasm. Functionally, peptide chain release factor 1 directs the termination of translation in response to the peptide chain termination codons UAG and UAA. The chain is Peptide chain release factor 1 from Clostridium beijerinckii (strain ATCC 51743 / NCIMB 8052) (Clostridium acetobutylicum).